We begin with the raw amino-acid sequence, 599 residues long: Dictomallein-2 (599 aa).

The signal sequence occupies residues 1–20 (MKLILIYLILVFNLFNFINC). In terms of domain architecture, Peptidase M66 spans 145-407 (PDVGQDYTLK…QNYFKNSIYY (263 aa)). His298 serves as a coordination point for Zn(2+). The active site involves Glu299. Zn(2+) contacts are provided by His302 and His308.

Belongs to the dictomallein family. Zn(2+) is required as a cofactor.

It localises to the secreted. The sequence is that of Dictomallein-2 (dtmlB) from Dictyostelium discoideum (Social amoeba).